A 1434-amino-acid chain; its full sequence is Probable ATP-dependent RNA helicase spindle-E (1434 aa).

The region spanning 125–292 is the Helicase ATP-binding domain; that stretch reads LAAINAHPVI…FATTNSIPPV (168 aa). An ATP-binding site is contributed by 138–145; it reads GETGCGKT. Positions 238 to 241 match the DEAH box motif; sequence DEVH. The region spanning 339–526 is the Helicase C-terminal domain; that stretch reads KIIVIIDNME…NSVLKAKVLN (188 aa). One can recognise a Tudor domain in the interval 938–1001; that stretch reads AGDITKGMMV…RLMPRELTEQ (64 aa).

The protein belongs to the DEAD box helicase family. DEAH subfamily.

Its subcellular location is the cytoplasm. It catalyses the reaction ATP + H2O = ADP + phosphate + H(+). Probable ATP-binding RNA helicase which plays a central role during spermatogenesis and oogenesis by repressing transposable elements and preventing their mobilization, which is essential for the germline integrity. Acts via the piRNA metabolic process, which mediates the repression of transposable elements during meiosis by forming complexes composed of piRNAs and Piwi and govern the methylation and subsequent repression of transposons. Involved in the repression of LTR retrotransposon copia. Also involved in telomere regulation by repressing specialized telomeric retroelements HeT-A, TAHRE, and TART; Drosophila telomeres being maintained by transposition of specialized telomeric retroelements. Involved in telomeric trans-silencing, a repression mechanism by which a transposon or a transgene inserted in subtelomeric heterochromatin has the capacity to repress in trans in the female germline, a homologous transposon, or transgene located in euchromatin. Involved in the repression of testis-expressed Stellate genes by the homologous Su(Ste) repeats. Required for anteroposterior and dorsoventral axis formation during oogenesis. This is Probable ATP-dependent RNA helicase spindle-E (spn-E) from Drosophila sechellia (Fruit fly).